We begin with the raw amino-acid sequence, 509 residues long: Scavenger receptor class B member 1 (509 aa).

Over 1–11 (MGGSARARWVA) the chain is Cytoplasmic. A helical transmembrane segment spans residues 12–32 (VGLGVVGLLCAVLGVVMILVM). Topologically, residues 33 to 440 (PSLIKQQVLK…YTQLVLMPQV (408 aa)) are extracellular. N-linked (GlcNAc...) asparagine glycosylation is found at Asn-102, Asn-108, Asn-173, Asn-212, Asn-227, Asn-255, Asn-310, Asn-330, and Asn-383. Cysteines 251 and 384 form a disulfide. Residues 441-461 (LQYVQYVLLGLGGLLLLVPVI) form a helical membrane-spanning segment. Residues 462–509 (YQLRSQEKCFLFWSGSKKGSQDKEAIQAYSESLMSPAAKGTVLQEAKL) lie on the Cytoplasmic side of the membrane.

This sequence belongs to the CD36 family. In terms of processing, N-glycosylated. Post-translationally, the six cysteines of the extracellular domain are all involved in intramolecular disulfide bonds.

It localises to the cell membrane. Its subcellular location is the membrane. It is found in the caveola. In terms of biological role, receptor for different ligands such as phospholipids, cholesterol ester, lipoproteins, phosphatidylserine and apoptotic cells. Receptor for HDL, mediating selective uptake of cholesteryl ether and HDL-dependent cholesterol efflux. Also facilitates the flux of free and esterified cholesterol between the cell surface and apoB-containing lipoproteins and modified lipoproteins, although less efficiently than HDL. May be involved in the phagocytosis of apoptotic cells, via its phosphatidylserine binding activity. In Cricetulus griseus (Chinese hamster), this protein is Scavenger receptor class B member 1 (SCARB1).